Reading from the N-terminus, the 776-residue chain is Isoamylase (776 aa).

The signal sequence occupies residues 1–26; the sequence is MKCPKILAALLGCAVLAGVPAMPAHA. Ca(2+) is bound by residues aspartate 154, glutamate 255, threonine 256, asparagine 258, and aspartate 285. The active-site Nucleophile is the aspartate 401. A disulfide bridge links cysteine 410 with cysteine 422. The active-site Proton donor is glutamate 461. 2 disulfides stabilise this stretch: cysteine 546–cysteine 616 and cysteine 738–cysteine 766.

Belongs to the glycosyl hydrolase 13 family. In terms of assembly, monomer. It depends on Ca(2+) as a cofactor.

It carries out the reaction Hydrolysis of (1-&gt;6)-alpha-D-glucosidic branch linkages in glycogen, amylopectin and their beta-limit dextrins.. The polypeptide is Isoamylase (iam) (Pseudomonas sp. (strain SMP1)).